A 185-amino-acid polypeptide reads, in one-letter code: HTH-type transcriptional regulator SA2364 (185 aa).

The HTH tetR-type domain occupies 6 to 66 (KENRQRIEEI…YVIQRDLDIF (61 aa)). The segment at residues 29–48 (SMNRIAKELGIGMGTLYRHF) is a DNA-binding region (H-T-H motif).

The polypeptide is HTH-type transcriptional regulator SA2364 (Staphylococcus aureus (strain N315)).